We begin with the raw amino-acid sequence, 245 residues long: Orotidine 5'-phosphate decarboxylase (245 aa).

Substrate-binding positions include D22, K44, 71 to 80, T131, R192, Q201, G221, and R222; that span reads DLKFHDIPNT. The active-site Proton donor is K73.

Belongs to the OMP decarboxylase family. Type 1 subfamily. Homodimer.

The enzyme catalyses orotidine 5'-phosphate + H(+) = UMP + CO2. Its pathway is pyrimidine metabolism; UMP biosynthesis via de novo pathway; UMP from orotate: step 2/2. Catalyzes the decarboxylation of orotidine 5'-monophosphate (OMP) to uridine 5'-monophosphate (UMP). The chain is Orotidine 5'-phosphate decarboxylase from Escherichia coli O45:K1 (strain S88 / ExPEC).